Consider the following 340-residue polypeptide: Mitochondrial carrier protein CoAc1 (340 aa).

6 helical membrane passes run 22-42 (ALDL…AGAF), 85-105 (FYKG…LHYM), 130-147 (LLAG…TYPL), 199-219 (GVGP…YIYE), 237-257 (LSCG…LDVV), and 297-317 (FAGL…GFTT). Solcar repeat units lie at residues 27–113 (PVYA…YRCW), 124–224 (TGPV…LKSQ), and 231–324 (DSVI…MKAL).

Belongs to the mitochondrial carrier (TC 2.A.29) family. In terms of tissue distribution, expressed throughout the plant.

The protein localises to the mitochondrion inner membrane. Functionally, required for the accumulation of coenzyme A in the mitochondrial matrix. In Zea mays (Maize), this protein is Mitochondrial carrier protein CoAc1.